The chain runs to 88 residues: MRLFLSLPVWVAVLAMVLEGPAPAQAAPEISSTLGSIPDKLKEFGNTLEDKARAAIESIKQSDIPAKTRNWFSETFNKVKEQLKTAFS.

The N-terminal stretch at methionine 1–alanine 26 is a signal peptide.

This sequence belongs to the apolipoprotein C1 family.

The protein localises to the secreted. Its function is as follows. Inhibitor of lipoprotein binding to the low density lipoprotein (LDL) receptor, LDL receptor-related protein, and very low density lipoprotein (VLDL) receptor. Associates with high density lipoproteins (HDL) and the triacylglycerol-rich lipoproteins in the plasma and makes up about 10% of the protein of the VLDL and 2% of that of HDL. Appears to interfere directly with fatty acid uptake and is also the major plasma inhibitor of cholesteryl ester transfer protein (CETP). Binds free fatty acids and reduces their intracellular esterification. Modulates the interaction of APOE with beta-migrating VLDL and inhibits binding of beta-VLDL to the LDL receptor-related protein. This chain is Apolipoprotein C-I (APOC1), found in Ursus maritimus (Polar bear).